The sequence spans 1465 residues: DNA polymerase III PolC-type (1465 aa).

The Exonuclease domain occupies 427–583 (YVVFDVETTG…YDAEATGRLL (157 aa)).

It belongs to the DNA polymerase type-C family. PolC subfamily.

The protein localises to the cytoplasm. It carries out the reaction DNA(n) + a 2'-deoxyribonucleoside 5'-triphosphate = DNA(n+1) + diphosphate. Required for replicative DNA synthesis. This DNA polymerase also exhibits 3' to 5' exonuclease activity. This chain is DNA polymerase III PolC-type, found in Streptococcus pyogenes serotype M2 (strain MGAS10270).